Consider the following 462-residue polypeptide: ATP synthase subunit beta (462 aa).

ATP is bound at residue 151–158 (GGAGVGKT).

This sequence belongs to the ATPase alpha/beta chains family. F-type ATPases have 2 components, CF(1) - the catalytic core - and CF(0) - the membrane proton channel. CF(1) has five subunits: alpha(3), beta(3), gamma(1), delta(1), epsilon(1). CF(0) has four main subunits: a(1), b(1), b'(1) and c(9-12).

It localises to the cell inner membrane. It catalyses the reaction ATP + H2O + 4 H(+)(in) = ADP + phosphate + 5 H(+)(out). Functionally, produces ATP from ADP in the presence of a proton gradient across the membrane. The catalytic sites are hosted primarily by the beta subunits. This Chlorobium phaeovibrioides (strain DSM 265 / 1930) (Prosthecochloris vibrioformis (strain DSM 265)) protein is ATP synthase subunit beta.